The chain runs to 323 residues: Aldo-keto reductase family 1 member C3 (323 aa).

Residues 20 to 24 and aspartate 50 contribute to the NADP(+) site; that span reads GFGTY. Catalysis depends on tyrosine 55, which acts as the Proton donor. Histidine 117 contacts substrate. Residues 166–167, glutamine 190, 216–221, and 270–280 contribute to the NADP(+) site; these read SN, YSALGS, and KSYNEQRIREN.

Belongs to the aldo/keto reductase family.

Its subcellular location is the cytoplasm. It catalyses the reaction a 3alpha-hydroxysteroid + NADP(+) = a 3-oxosteroid + NADPH + H(+). The catalysed reaction is a 3alpha-hydroxysteroid + NAD(+) = a 3-oxosteroid + NADH + H(+). The enzyme catalyses prostaglandin F2alpha + NADP(+) = prostaglandin D2 + NADPH + H(+). It carries out the reaction testosterone + NAD(+) = androst-4-ene-3,17-dione + NADH + H(+). It catalyses the reaction testosterone + NADP(+) = androst-4-ene-3,17-dione + NADPH + H(+). The catalysed reaction is prostaglandin F2alpha + NADP(+) = prostaglandin H2 + NADPH + H(+). The enzyme catalyses prostaglandin D2 + NADPH + H(+) = 11beta-prostaglandin F2 + NADP(+). It carries out the reaction prostaglandin D2-ethanolamide + NADPH + H(+) = 11beta-prostaglandin F2-ethanolamide + NADP(+). It catalyses the reaction 17beta-estradiol + NADP(+) = estrone + NADPH + H(+). The catalysed reaction is 17beta-estradiol + NAD(+) = estrone + NADH + H(+). The enzyme catalyses (20S)-hydroxypregn-4-en-3-one + NADP(+) = progesterone + NADPH + H(+). It carries out the reaction (20S)-hydroxypregn-4-en-3-one + NAD(+) = progesterone + NADH + H(+). It catalyses the reaction 5alpha-androstane-3alpha,17beta-diol + NADP(+) = 17beta-hydroxy-5alpha-androstan-3-one + NADPH + H(+). The catalysed reaction is 5alpha-androstane-3alpha,17beta-diol + NAD(+) = 17beta-hydroxy-5alpha-androstan-3-one + NADH + H(+). The enzyme catalyses androsterone + NADPH + H(+) = 5alpha-androstane-3alpha,17beta-diol + NADP(+). It carries out the reaction 5alpha-androstane-3alpha,17beta-diol + NAD(+) = androsterone + NADH + H(+). It catalyses the reaction 5alpha-androstane-3beta,17beta-diol + NADP(+) = 17beta-hydroxy-5alpha-androstan-3-one + NADPH + H(+). The catalysed reaction is 9-cis-retinol + NADP(+) = 9-cis-retinal + NADPH + H(+). It participates in steroid metabolism. Its function is as follows. Cytosolic aldo-keto reductase that catalyzes the NADH and NADPH-dependent reduction of ketosteroids to hydroxysteroids. Acts as a NAD(P)(H)-dependent 3-, 17- and 20-ketosteroid reductase on the steroid nucleus and side chain and regulates the metabolism of androgens, estrogens and progesterone. Displays the ability to catalyze both oxidation and reduction in vitro, but most probably acts as a reductase in vivo since the oxidase activity measured in vitro is inhibited by physiological concentration of NADPH. Acts preferentially as a 17-ketosteroid reductase and has the highest catalytic efficiency of the AKR1C enzyme for the reduction of delta4-androstenedione to form testosterone. Reduces prostaglandin (PG) D2 to 11beta-prostaglandin F2, progesterone to 20alpha-hydroxyprogesterone and estrone to 17beta-estradiol. Catalyzes the transformation of the potent androgen dihydrotestosterone (DHT) into the less active form, 5-alpha-androstan-3-alpha,17-beta-diol (3-alpha-diol). Also displays retinaldehyde reductase activity toward 9-cis-retinal. The polypeptide is Aldo-keto reductase family 1 member C3 (AKR1C3) (Pongo abelii (Sumatran orangutan)).